The sequence spans 583 residues: Sensor protein SrrB (583 aa).

Topologically, residues 1–11 (MMSRLNSVVIK) are cytoplasmic. A helical membrane pass occupies residues 12 to 32 (LWLTIILIVTTVLILLSIALI). Residues 33-174 (TFMQYYFTQE…SIEDTNNAIT (142 aa)) lie on the Extracellular side of the membrane. The helical transmembrane segment at 175–195 (IITIITAVIFLTITTVFAFFL) threads the bilayer. Residues 196–583 (SSRITKPLRR…TFIIKLPKPE (388 aa)) are Cytoplasmic-facing. The HAMP domain occupies 197–249 (SRITKPLRRLRDQATRVSEGDYSYKPSVTTKDEIGQLSQAFNQMSTEIEEHVD). Residues 366–583 (NVSHELRTPI…TFIIKLPKPE (218 aa)) form the Histidine kinase domain. Residue His369 is modified to Phosphohistidine; by autocatalysis.

The protein localises to the cell membrane. It carries out the reaction ATP + protein L-histidine = ADP + protein N-phospho-L-histidine.. Member of the two-component regulatory system SrrA/SrrB, which is involved in the global regulation of staphylococcal virulence factors in response to environmental oxygen levels as well as biofilm formation. Also plays an essential role in host-derived nitric oxide resistance by regulating hmp/flavohemoglobin, an enzyme that detoxifies nitric oxide by converting it to nitrate. Functions as a sensor protein kinase which is autophosphorylated at a histidine residue and transfers its phosphate group to SrrA. In turn, SrrA binds to the upstream promoter regions of the target genes to positively and negatively regulate their expression. In Staphylococcus aureus, this protein is Sensor protein SrrB (srrB).